The chain runs to 62 residues: Ferredoxin-2 (62 aa).

2 consecutive 4Fe-4S ferredoxin-type domains span residues 2–28 (AHRITDECTYCAACEPECPVSAISAGD) and 29–62 (SIYVIDENVCVDCIGYHDEPACVAVCPVDCIIKV). 8 residues coordinate [4Fe-4S] cluster: cysteine 9, cysteine 12, cysteine 15, cysteine 19, cysteine 38, cysteine 41, cysteine 50, and cysteine 54.

The cofactor is [4Fe-4S] cluster.

Its function is as follows. Ferredoxins are iron-sulfur proteins that transfer electrons in a wide variety of metabolic reactions. The protein is Ferredoxin-2 of Chlorobaculum tepidum (strain ATCC 49652 / DSM 12025 / NBRC 103806 / TLS) (Chlorobium tepidum).